A 259-amino-acid polypeptide reads, in one-letter code: DNA repair protein RecO (259 aa).

It belongs to the RecO family.

Functionally, involved in DNA repair and RecF pathway recombination. This is DNA repair protein RecO from Leuconostoc mesenteroides subsp. mesenteroides (strain ATCC 8293 / DSM 20343 / BCRC 11652 / CCM 1803 / JCM 6124 / NCDO 523 / NBRC 100496 / NCIMB 8023 / NCTC 12954 / NRRL B-1118 / 37Y).